A 62-amino-acid chain; its full sequence is uncharacterized protein (62 aa).

This is an uncharacterized protein from Methanocaldococcus jannaschii (strain ATCC 43067 / DSM 2661 / JAL-1 / JCM 10045 / NBRC 100440) (Methanococcus jannaschii).